Here is a 344-residue protein sequence, read N- to C-terminus: uncharacterized protein (344 aa).

Positions 304-344 (AVPAPTPRRPLDSVLQIRQTPEKGRNASDRNARETGWFSPP) are disordered. The segment covering 323–336 (TPEKGRNASDRNAR) has biased composition (basic and acidic residues).

This is an uncharacterized protein from Mycobacterium tuberculosis (strain CDC 1551 / Oshkosh).